We begin with the raw amino-acid sequence, 162 residues long: UPF0262 protein HNE_1347 (162 aa).

Belongs to the UPF0262 family.

The chain is UPF0262 protein HNE_1347 from Hyphomonas neptunium (strain ATCC 15444).